Reading from the N-terminus, the 132-residue chain is Small ribosomal subunit protein uS8 (132 aa).

The protein belongs to the universal ribosomal protein uS8 family. In terms of assembly, part of the 30S ribosomal subunit. Contacts proteins S5 and S12.

Functionally, one of the primary rRNA binding proteins, it binds directly to 16S rRNA central domain where it helps coordinate assembly of the platform of the 30S subunit. The polypeptide is Small ribosomal subunit protein uS8 (Acetivibrio thermocellus (strain ATCC 27405 / DSM 1237 / JCM 9322 / NBRC 103400 / NCIMB 10682 / NRRL B-4536 / VPI 7372) (Clostridium thermocellum)).